The sequence spans 971 residues: MASNNVAQFAAELKMPAGVLLEQLQAAGVQKASEDDALSEADKARLLDHLRKSHGATDGDKRKITLTRKHTSEIKQSDATGKARTIQVEVRKKRTFVKRDDVAEGAEQGQAQVAEADDDAELKRREEEARREAELLEKQAQELRERQERLEREEAERRAREEAAEAQRRRAEEEAAAKRAAAAAVEAQQVAAQQAAEAQQETAGAQSAQDEARAAAERAAQREAAKKAEDAAREAADKTRAEQEEIRKRREAAEAEARAIREMMNTPRKAMVKAVEPPKPVEPPKPVEAKGTLHKPAKPAGASAARPAVKKPAGAAPATTAPAGAGDRNKKPGGGKGGWQDDAAKRRGIKTRGDSSGGVDRGWRGGPKGRGRHQDSASTFQAPTEPIVREVHVPETVSVADLAHKMSIKASEVIKVMMKMGQMVTINQVLDQETAMIVVEELGHRAVAAKLDDPEALLVEGETTTDAEQLPRPPVVTVMGHVDHGKTSLLDHIRRAKVAAGEAGGITQHIGAYHVETPRGVITFLDTPGHEAFTAMRARGAKATDIVVLVVAADDGVMPQTKEAIAHAKAGGVPIVVAINKIDKPEANPDRVKQELVAEGVVPEEYGGDSPFVPVSAKTGVGIDDLLENVLLQAEVLELKAPIEAPAKGIVIEAKLDKGKGPVATILVQSGTLNRGDVVLAGSAYGRVRAMLDENGKPTKEAGPSIPVEIQGLSEVPGAGEEVIVLPDERKAREIALFRQGKFRDVKLAKQQAAKLESMLEQMGEGEVQNLPLIIKADVQGSQEALVQSLLKLSTDEVRVQIVHSAVGGISENDVNLATASKAVIIGFNTRADAQARKLAESNGIDIRYYNIIYDAVDEVKAAMSGMLAPEKREVITGMVEVRQVFKVPKIGTVAGCMVTDGIVKRSSSVRVLRNNVVIFTGELESLKRFKDDVKEVKQGFECGMSVKNFNDVTEGDQFEVFEVTEVARTL.

The span at 49 to 63 (HLRKSHGATDGDKRK) shows a compositional bias: basic and acidic residues. Disordered regions lie at residues 49–86 (HLRK…ARTI) and 101–385 (DVAE…APTE). Residues 105-114 (GAEQGQAQVA) show a composition bias toward low complexity. Positions 121–177 (ELKRREEEARREAELLEKQAQELRERQERLEREEAERRAREEAAEAQRRRAEEEAAA) are enriched in basic and acidic residues. Residues 178–209 (KRAAAAAVEAQQVAAQQAAEAQQETAGAQSAQ) are compositionally biased toward low complexity. Residues 210–261 (DEARAAAERAAQREAAKKAEDAAREAADKTRAEQEEIRKRREAAEAEARAIR) show a composition bias toward basic and acidic residues. Over residues 277-286 (PPKPVEPPKP) the composition is skewed to pro residues. Residues 298–325 (KPAGASAARPAVKKPAGAAPATTAPAGA) show a composition bias toward low complexity. A compositionally biased stretch (gly residues) spans 355–368 (SSGGVDRGWRGGPK). The 170-residue stretch at 471-640 (PRPPVVTVMG…LLQAEVLELK (170 aa)) folds into the tr-type G domain. Residues 480–487 (GHVDHGKT) are G1. 480-487 (GHVDHGKT) lines the GTP pocket. Positions 505 to 509 (GITQH) are G2. A G3 region spans residues 526–529 (DTPG). Residues 526-530 (DTPGH) and 580-583 (NKID) each bind GTP. The interval 580–583 (NKID) is G4. The segment at 616–618 (SAK) is G5.

This sequence belongs to the TRAFAC class translation factor GTPase superfamily. Classic translation factor GTPase family. IF-2 subfamily.

The protein resides in the cytoplasm. Its function is as follows. One of the essential components for the initiation of protein synthesis. Protects formylmethionyl-tRNA from spontaneous hydrolysis and promotes its binding to the 30S ribosomal subunits. Also involved in the hydrolysis of GTP during the formation of the 70S ribosomal complex. In Burkholderia ambifaria (strain ATCC BAA-244 / DSM 16087 / CCUG 44356 / LMG 19182 / AMMD) (Burkholderia cepacia (strain AMMD)), this protein is Translation initiation factor IF-2.